A 206-amino-acid chain; its full sequence is Transcription elongation factor A protein-like 5 (206 aa).

Positions 1 to 26 (MEKLYKENEGKPENERNLESEGKPED) are enriched in basic and acidic residues. Residues 1 to 206 (MEKLYKENEG…QKDLEDVPYV (206 aa)) form a disordered region. Acidic residues predominate over residues 27 to 42 (EGSTEDEGKSDEEEKP). Basic and acidic residues predominate over residues 43 to 56 (DMEGKTECEGKRED). Residues 57 to 70 (EGEPGDEGQLEDEG) are compositionally biased toward acidic residues. Composition is skewed to basic and acidic residues over residues 71-86 (NQEK…KPQS), 102-113 (AAEKRPAEDYVP), 121-160 (DRGT…EELR), and 196-206 (GQKDLEDVPYV).

It belongs to the TFS-II family. TFA subfamily.

It is found in the nucleus. Its function is as follows. May be involved in transcriptional regulation. This Homo sapiens (Human) protein is Transcription elongation factor A protein-like 5 (TCEAL5).